The following is a 721-amino-acid chain: uncharacterized protein (721 aa).

Residues 6-26 traverse the membrane as a helical segment; sequence QLIFVNFYVILIIWWFVMGIL. ATP is bound at residue 308 to 315; the sequence is GGTGSGKT.

This sequence belongs to the GSP E family. This protein undergoes a protein self splicing that involves a post-translational excision of the intervening region (intein) followed by peptide ligation.

The protein resides in the membrane. This is an uncharacterized protein from Methanocaldococcus jannaschii (strain ATCC 43067 / DSM 2661 / JAL-1 / JCM 10045 / NBRC 100440) (Methanococcus jannaschii).